The following is a 192-amino-acid chain: Per os infectivity factor 6 (192 aa).

The chain crosses the membrane as a helical span at residues 154 to 174 (IAYVFLFFICIVLLSVLAVFF).

The protein resides in the host membrane. Its subcellular location is the virion. It localises to the host cytoplasm. It is found in the host nucleus. Functionally, per os infectivity factor. The polypeptide is Per os infectivity factor 6 (AC68) (Autographa californica nuclear polyhedrosis virus (AcMNPV)).